We begin with the raw amino-acid sequence, 307 residues long: NAD kinase 2 (307 aa).

The Proton acceptor role is filled by Asp77. NAD(+) is bound by residues 77–78 (DG), 151–152 (NE), Asp181, 192–197 (TAYALS), and Asn251.

It belongs to the NAD kinase family. A divalent metal cation is required as a cofactor.

Its subcellular location is the cytoplasm. It catalyses the reaction NAD(+) + ATP = ADP + NADP(+) + H(+). In terms of biological role, involved in the regulation of the intracellular balance of NAD and NADP, and is a key enzyme in the biosynthesis of NADP. Catalyzes specifically the phosphorylation on 2'-hydroxyl of the adenosine moiety of NAD to yield NADP. The chain is NAD kinase 2 from Thermosynechococcus vestitus (strain NIES-2133 / IAM M-273 / BP-1).